Here is a 124-residue protein sequence, read N- to C-terminus: Small ribosomal subunit protein bS6 (124 aa).

Belongs to the bacterial ribosomal protein bS6 family.

Functionally, binds together with bS18 to 16S ribosomal RNA. The sequence is that of Small ribosomal subunit protein bS6 from Bordetella avium (strain 197N).